Consider the following 89-residue polypeptide: uncharacterized protein (89 aa).

The helical transmembrane segment at 39–61 (FVCFWSIWFWTGDISFSLLSMLV) threads the bilayer.

It is found in the membrane. This is an uncharacterized protein from Saccharomyces cerevisiae (strain ATCC 204508 / S288c) (Baker's yeast).